We begin with the raw amino-acid sequence, 628 residues long: Kelch-like protein 14 (628 aa).

In terms of domain architecture, BTB spans 33–151 (CDVTLTAQGQ…LYTANVTLSL (119 aa)). The disordered stretch occupies residues 69 to 115 (GGGVGGQDGLGAPKDQQQPPQQQPSQQQQPPPQEEPGTPSSSPDDKL). Residues 84–96 (QQQPPQQQPSQQQ) show a composition bias toward low complexity. One can recognise a BACK domain in the interval 210–279 (VEDVLLLNFE…PAPELVERVQ (70 aa)). 6 Kelch repeats span residues 323–372 (MLLL…EVEN), 373–424 (FLFV…RLDK), 425–471 (HLYV…VHNG), 473–518 (IYIS…VMND), 520–570 (LYAI…VLDD), and 572–620 (IYLV…TVIL).

Interacts with TOR1A, preferentially with the ATP-free form.

The protein resides in the cytoplasm. The protein localises to the cytosol. Its subcellular location is the endoplasmic reticulum membrane. This Homo sapiens (Human) protein is Kelch-like protein 14 (KLHL14).